The primary structure comprises 365 residues: Chorismate synthase (365 aa).

Over residues 41–51 (IQKELDRRRPG) the composition is skewed to basic and acidic residues. A disordered region spans residues 41–62 (IQKELDRRRPGQSEVSTPRSEA). Arg-48 is a binding site for NADP(+). Residues 125 to 127 (RSS), Gly-285, 300 to 304 (KPTPS), and Arg-327 each bind FMN.

Belongs to the chorismate synthase family. FMNH2 serves as cofactor.

The catalysed reaction is 5-O-(1-carboxyvinyl)-3-phosphoshikimate = chorismate + phosphate. It participates in metabolic intermediate biosynthesis; chorismate biosynthesis; chorismate from D-erythrose 4-phosphate and phosphoenolpyruvate: step 7/7. Its function is as follows. Catalyzes the anti-1,4-elimination of the C-3 phosphate and the C-6 proR hydrogen from 5-enolpyruvylshikimate-3-phosphate (EPSP) to yield chorismate, which is the branch point compound that serves as the starting substrate for the three terminal pathways of aromatic amino acid biosynthesis. This reaction introduces a second double bond into the aromatic ring system. The polypeptide is Chorismate synthase (Methanosarcina acetivorans (strain ATCC 35395 / DSM 2834 / JCM 12185 / C2A)).